A 931-amino-acid polypeptide reads, in one-letter code: Neuropilin-2 (931 aa).

Positions 1-20 form a signal peptide, or 22; it reads MDMFPLTWVFLALYFSRHQV. At 21-864 the chain is on the extracellular side; that stretch reads RGQPDPPCGG…EKSWLYTLDP (844 aa). Cystine bridges form between C28–C55, C83–C105, and C149–C175. 2 CUB domains span residues 28–142 and 149–267; these read CGGR…YEIF and CSKN…YYLV. Residues N152 and N157 are each glycosylated (N-linked (GlcNAc...) asparagine). Positions 197, 211, and 252 each coordinate Ca(2+). Residues C208 and C230 are joined by a disulfide bond. Intrachain disulfides connect C277/C427 and C434/C592. 2 F5/8 type C domains span residues 277 to 427 and 434 to 592; these read CNVP…LFGC and CSNM…VLGC. Over residues 298-310 the composition is skewed to polar residues; that stretch reads TYSDGRWTPQQSR. A disordered region spans residues 298 to 317; that stretch reads TYSDGRWTPQQSRLHGDDNG. Residues 601–622 form a disordered region; that stretch reads VETLGPTVKSEETTTPYPTEEE. A glycan (N-linked (GlcNAc...) asparagine) is linked at N629. The MAM domain maps to 642-802; that stretch reads SGFNCNFDFL…TDVPLENCME (161 aa). The N-linked (GlcNAc...) asparagine glycan is linked to N839. The helical transmembrane segment at 865–889 threads the bilayer; it reads ILITIIAMSSLGVLLGATCAGLLLY. At 890 to 931 the chain is on the cytoplasmic side; sequence CTCSYSGLSSRSCTTLENYNFELYDGLKHKVKMNHQKCCSEA.

This sequence belongs to the neuropilin family. Heterodimer with NRP1. Binds PLXNB1. As to quaternary structure, (Microbial infection) Interacts with human cytomegalovirus proteins gL, UL128, UL130 and UL131A.

Its subcellular location is the membrane. The protein resides in the secreted. Its function is as follows. High affinity receptor for semaphorins 3C, 3F, VEGF-165 and VEGF-145 isoforms of VEGF, and the PLGF-2 isoform of PGF. (Microbial infection) Acts as a receptor for human cytomegalovirus pentamer-dependent entry in epithelial and endothelial cells. This is Neuropilin-2 (NRP2) from Homo sapiens (Human).